Reading from the N-terminus, the 151-residue chain is Ubiquitin-conjugating enzyme E2 2 (151 aa).

Residues 1-26 form a disordered region; that stretch reads MSTSARRRLMRDFKRMQTDPPAGVSA. A UBC core domain is found at 4–150; the sequence is SARRRLMRDF…VRETVEKSWE (147 aa). The Glycyl thioester intermediate role is filled by cysteine 88.

This sequence belongs to the ubiquitin-conjugating enzyme family.

It localises to the cytoplasm. It is found in the nucleus. It carries out the reaction S-ubiquitinyl-[E1 ubiquitin-activating enzyme]-L-cysteine + [E2 ubiquitin-conjugating enzyme]-L-cysteine = [E1 ubiquitin-activating enzyme]-L-cysteine + S-ubiquitinyl-[E2 ubiquitin-conjugating enzyme]-L-cysteine.. Its pathway is protein modification; protein ubiquitination. Functionally, catalyzes the covalent attachment of ubiquitin to other proteins. Plays a role in transcription regulation by catalyzing the monoubiquitination of histone H2B to form H2BK123ub1. H2BK123ub1 gives a specific tag for epigenetic transcriptional activation and is also a prerequisite for H3K4me and H3K79me formation. Also involved in postreplication repair of UV-damaged DNA, in N-end rule-dependent protein degradation and in sporulation. This chain is Ubiquitin-conjugating enzyme E2 2 (ubc2), found in Aspergillus fumigatus (strain ATCC MYA-4609 / CBS 101355 / FGSC A1100 / Af293) (Neosartorya fumigata).